The following is a 159-amino-acid chain: Transcriptional repressor NrdR (159 aa).

Residues 3–34 fold into a zinc finger; it reads CPFCRHEDTQVVDSRVSEDGAAIRRRRRCSAC. The 91-residue stretch at 49–139 folds into the ATP-cone domain; that stretch reads PAVVKKDGSR…VYRRFEDVSE (91 aa).

The protein belongs to the NrdR family. Zn(2+) is required as a cofactor.

In terms of biological role, negatively regulates transcription of bacterial ribonucleotide reductase nrd genes and operons by binding to NrdR-boxes. In Burkholderia ambifaria (strain MC40-6), this protein is Transcriptional repressor NrdR.